Reading from the N-terminus, the 541-residue chain is Peptide chain release factor 3 (541 aa).

The tr-type G domain occupies 14–283 (EARRNFAIIS…AFLDYALKPG (270 aa)). GTP-binding positions include 23–30 (SHPDAGKT), 91–95 (DTPGH), and 145–148 (NKLD).

Belongs to the TRAFAC class translation factor GTPase superfamily. Classic translation factor GTPase family. PrfC subfamily.

It localises to the cytoplasm. Increases the formation of ribosomal termination complexes and stimulates activities of RF-1 and RF-2. It binds guanine nucleotides and has strong preference for UGA stop codons. It may interact directly with the ribosome. The stimulation of RF-1 and RF-2 is significantly reduced by GTP and GDP, but not by GMP. This chain is Peptide chain release factor 3, found in Acaryochloris marina (strain MBIC 11017).